A 368-amino-acid chain; its full sequence is 2-oxoglutarate-dependent dioxygenase frbJ (368 aa).

In terms of domain architecture, Fe2OG dioxygenase spans 171–277 (QQHKLKIVKY…RYSIPFFQGV (107 aa)). Fe cation-binding residues include His198, Asp200, and His256. Residue Arg268 coordinates 2-oxoglutarate.

This sequence belongs to the iron/ascorbate-dependent oxidoreductase family.

It functions in the pathway antifungal biosynthesis. 2-oxoglutarate-dependent dioxygenase; part of the gene cluster that mediates the biosynthesis of the antifungal antibiotic FR901469, an inhibitor of beta-1,3-glucansynthase, exerting antifungal activity against the pathogenes Candida albicans and Aspergillus fumigatus. FR901469 is a cyclic depsipeptide containing 12 amino acid residues and a fatty acid chain. The NRPS frbI contains 12 modules responsible for the formation of the depsipeptide backbone which is denoted as Acyl-Thr-Ala-Tyr-Val-4OHPro-Thr-Thr-3OHPro-threo3OHGln-Gly-Thr-Orn-OH (C71H116N14O23). The PKS frbB is probably involved in the production of the hydrocarbon chain, and the acyl-CoA ligase frbC might be involved in the transport of the chain to the peptide ptoduct of frbI. Because FR901469 contains 3 hydroxylated amino acid residues, the 3 oxygenases frbA, frbH, and frbJ might be participating in amino acid hydroxylation. As no thioesterase domains were detected in frbI or frbB, the thioesterases frbD and frbE may instead release and cyclize the products of the NRPS and PKS, respectively. The protein is 2-oxoglutarate-dependent dioxygenase frbJ of Dothideomycetidae sp. (strain 11243) (Fungal sp. (strain No.11243)).